Here is a 763-residue protein sequence, read N- to C-terminus: Fibroblast growth factor receptor (763 aa).

A signal peptide spans 1–27 (MKEFEVKVASTAFVLVLFSLTINQILA). The Extracellular segment spans residues 28 to 291 (SETSTKFRSP…ITKGIPNETN (264 aa)). The interval 34–74 (FRSPVPAPTVPDWNHLPNEGNEENVVSAPKQDGASGGQKPY) is disordered. Ig-like C2-type domains follow at residues 73–164 (PYWT…YQLD) and 173–270 (PILA…AWLS). Cysteines 98 and 148 form a disulfide. N-linked (GlcNAc...) asparagine glycans are attached at residues asparagine 158, asparagine 182, asparagine 220, asparagine 230, asparagine 243, and asparagine 288. Cysteines 195 and 254 form a disulfide. The helical transmembrane segment at 292-312 (IIIYVMCGVLVILFGLAVVLV) threads the bilayer. Residues 313–763 (LYYHCYNGKD…NEHARLRSEA (451 aa)) are Cytoplasmic-facing. The 291-residue stretch at 382–672 (ITLVERLDEG…TLVEDLDRML (291 aa)) folds into the Protein kinase domain. ATP contacts are provided by residues 388–396 (LDEGFFGQV) and lysine 417. Residue aspartate 537 is the Proton acceptor of the active site. A Phosphotyrosine; by autocatalysis modification is found at tyrosine 568. Acidic residues predominate over residues 691-711 (YSESSEDESESQNSDEEDDDS). The interval 691–742 (YSESSEDESESQNSDEEDDDSVFERMRQIDSLSNGNIPFNEEDSSNSDPYVA) is disordered.

Belongs to the protein kinase superfamily. Tyr protein kinase family. Fibroblast growth factor receptor subfamily.

The protein resides in the membrane. The enzyme catalyses L-tyrosyl-[protein] + ATP = O-phospho-L-tyrosyl-[protein] + ADP + H(+). Its function is as follows. Receptor for basic fibroblast growth factor. The chain is Fibroblast growth factor receptor (FGFR) from Halocynthia roretzi (Sea squirt).